Here is a 277-residue protein sequence, read N- to C-terminus: Pantothenate synthetase (277 aa).

26–33 (MGNLHEGH) is a binding site for ATP. Catalysis depends on histidine 33, which acts as the Proton donor. (R)-pantoate is bound at residue glutamine 57. Position 57 (glutamine 57) interacts with beta-alanine. ATP is bound at residue 144–147 (GKKD). (R)-pantoate is bound at residue glutamine 150. Residues valine 173 and 181–184 (LSSR) each bind ATP.

Belongs to the pantothenate synthetase family. In terms of assembly, homodimer.

It is found in the cytoplasm. It catalyses the reaction (R)-pantoate + beta-alanine + ATP = (R)-pantothenate + AMP + diphosphate + H(+). Its pathway is cofactor biosynthesis; (R)-pantothenate biosynthesis; (R)-pantothenate from (R)-pantoate and beta-alanine: step 1/1. Functionally, catalyzes the condensation of pantoate with beta-alanine in an ATP-dependent reaction via a pantoyl-adenylate intermediate. This is Pantothenate synthetase from Paraburkholderia phymatum (strain DSM 17167 / CIP 108236 / LMG 21445 / STM815) (Burkholderia phymatum).